We begin with the raw amino-acid sequence, 255 residues long: Thiazole synthase (255 aa).

Lys95 (schiff-base intermediate with DXP) is an active-site residue. 1-deoxy-D-xylulose 5-phosphate-binding positions include Gly156, 182–183 (AG), and 204–205 (NT).

This sequence belongs to the ThiG family. In terms of assembly, homotetramer. Forms heterodimers with either ThiH or ThiS.

Its subcellular location is the cytoplasm. It catalyses the reaction [ThiS sulfur-carrier protein]-C-terminal-Gly-aminoethanethioate + 2-iminoacetate + 1-deoxy-D-xylulose 5-phosphate = [ThiS sulfur-carrier protein]-C-terminal Gly-Gly + 2-[(2R,5Z)-2-carboxy-4-methylthiazol-5(2H)-ylidene]ethyl phosphate + 2 H2O + H(+). The protein operates within cofactor biosynthesis; thiamine diphosphate biosynthesis. Functionally, catalyzes the rearrangement of 1-deoxy-D-xylulose 5-phosphate (DXP) to produce the thiazole phosphate moiety of thiamine. Sulfur is provided by the thiocarboxylate moiety of the carrier protein ThiS. In vitro, sulfur can be provided by H(2)S. This is Thiazole synthase from Photorhabdus laumondii subsp. laumondii (strain DSM 15139 / CIP 105565 / TT01) (Photorhabdus luminescens subsp. laumondii).